Reading from the N-terminus, the 371-residue chain is ETS-related transcription factor Elf-3 (371 aa).

Positions 46–132 constitute a PNT domain; that stretch reads NPQMSLEGTE…AQLRDLTSSS (87 aa). The 9aaTAD signature appears at 137–145; it reads SWIIELLEK. Residues 173-251 form a disordered region; it reads GQQASPYHPG…HGKRKRGRPR (79 aa). Over residues 181 to 216 the composition is skewed to low complexity; sequence PGSCGAGAPSPGSSDVSTAGTGASRSSHSSDSGGSD. Positions 231–241 are enriched in basic and acidic residues; the sequence is GFRDCKKGDPK. Basic residues predominate over residues 242–251; that stretch reads HGKRKRGRPR. Positions 273–355 form a DNA-binding region, ETS; that stretch reads THLWEFIRDI…DGRRLVYKFG (83 aa).

The protein belongs to the ETS family. In terms of assembly, interacts with TBP. Interacts with CREBBP and EP300; these act as transcriptional coactivators of ELF3 and positively modulate its function. Interacts with XRCC5/KU86 and XRCC6/KU70; these inhibit the ability of ELF3 to bind DNA and negatively modulate its transcriptional activity. Associated with CLND7 and POU2F3. Interacts with ZNF768. Expressed exclusively in tissues containing a high content of terminally differentiated epithelial cells including mammary gland, colon, trachea, kidney, prostate, uterus, stomach and skin.

Its subcellular location is the cytoplasm. It is found in the nucleus. Functionally, transcriptional activator that binds and transactivates ETS sequences containing the consensus nucleotide core sequence GGA[AT]. Acts synergistically with POU2F3 to transactivate the SPRR2A promoter and with RUNX1 to transactivate the ANGPT1 promoter. Also transactivates collagenase, CCL20, CLND7, FLG, KRT8, NOS2, PTGS2, SPRR2B, TGFBR2 and TGM3 promoters. Represses KRT4 promoter activity. Involved in mediating vascular inflammation. May play an important role in epithelial cell differentiation and tumorigenesis. May be a critical downstream effector of the ERBB2 signaling pathway. May be associated with mammary gland development and involution. Plays an important role in the regulation of transcription with TATA-less promoters in preimplantation embryos, which is essential in preimplantation development. The chain is ETS-related transcription factor Elf-3 from Homo sapiens (Human).